The primary structure comprises 103 residues: MKTLLLTLVVVTIICLDLGYTEMCNMCVRPYPFMSSCCPEGQDRCYKSYWVNENGKQKKYHGKYPVILERGCVTACTGPGSGSIYNLYTCCPTNRCGSSSTSG.

Positions 1–21 (MKTLLLTLVVVTIICLDLGYT) are cleaved as a signal peptide. 5 disulfides stabilise this stretch: C24–C45, C27–C37, C38–C72, C76–C90, and C91–C96.

This sequence belongs to the three-finger toxin family. Ancestral subfamily. Orphan group XVII sub-subfamily. Expressed by the venom gland.

It localises to the secreted. In terms of biological role, this toxin inhibits the binding of [3H]quinuclidinyl benzilate to the M2 muscarinic acetylcholine (mAchR) receptor subtype (CHRM2). The protein is Muscarinic toxin BM14 of Bungarus multicinctus (Many-banded krait).